The sequence spans 408 residues: Protein ZNF365 (408 aa).

S16 is subject to Phosphoserine. The C2H2-type; degenerate zinc finger occupies 26–51; the sequence is FRCPRCGDHTRFRSLSSLRAHLEFSH. 2 positions are modified to phosphoserine: S139 and S146. A coiled-coil region spans residues 170 to 298; that stretch reads VEAVDRTIEK…QLEYYQSQQA (129 aa). T176 is modified (phosphothreonine). S370 is modified (phosphoserine).

As to quaternary structure, homodimers. Interacts with NDE1 and NDEL1. Interacts with DISC1. Interacts with PARP1. Interacts with MCRS1. Expressed in cerebral cortex, hippocampus, olfactory tubercle and striatum.

The protein resides in the cytoplasm. The protein localises to the cytoskeleton. It is found in the microtubule organizing center. Its subcellular location is the centrosome. Functionally, involved in the positive regulation of oligodendrocyte differentiation during postnatal growth. Involved in the morphogenesis of basket cells in the somatosensory cortex during embryogenesis. Involved in dendritic arborization, morphogenesis of spine density dendrite, and establishment of postsynaptic dendrite density in cortical pyramidal neurons. Involved in the regulation of neurogenesis. Negatively regulates neurite outgrowth. Involved in homologous recombination (HR) repair pathway. Required for proper resolution of DNA double-strand breaks (DSBs) by HR. Is required for recovery of stalled replication forks, and directly contributes to genomic stability. Interacts with PARP1 and mediates MRE11-dependent DNA end resection during replication fork recovery. Contributes to genomic stability by preventing telomere dysfunction. The chain is Protein ZNF365 (Znf365) from Rattus norvegicus (Rat).